A 63-amino-acid polypeptide reads, in one-letter code: MNFYKIFVFIALILALSVSQSEAGWLKKIGKKIERVGQNTRDATVKGLEVAQQAANVAATVRG.

Positions 1–23 (MNFYKIFVFIALILALSVSQSEA) are cleaved as a signal peptide. Position 62 is an arginine amide (R62).

As to quaternary structure, monomer. As to expression, hemolymph.

It localises to the secreted. Cecropins have lytic and antibacterial activity against several Gram-negative bacteria. This is Cecropin from Glossina morsitans morsitans (Savannah tsetse fly).